The primary structure comprises 945 residues: Argonaute protein wago-1 (945 aa).

Residues methionine 1 to alanine 20 show a composition bias toward pro residues. The interval methionine 1–serine 41 is disordered. The region spanning threonine 322–arginine 432 is the PAZ domain. Residues valine 636 to lysine 899 enclose the Piwi domain.

It belongs to the Argonaute family. WAGO subfamily. As to quaternary structure, interacts with rde-12. Interacts with znfx-1. In terms of tissue distribution, enriched in sperm and oocytes.

The protein resides in the cytoplasmic granule. Its function is as follows. Argonaute protein which is involved in the endogenous small interfering RNA (endo-siRNA) pathway. Interacts with secondary 22G-RNAs, which are RNA-dependent RNA polymerase-derived endo-siRNAs, typically 22 nucleotides in length with a 5'guanosine residue. In the germline, functions in a genome surveillance system to silence transposons and aberrant transcripts. This is Argonaute protein wago-1 from Caenorhabditis elegans.